A 931-amino-acid chain; its full sequence is Valine--tRNA ligase (931 aa).

The 'HIGH' region motif lies at 42–52; sequence PNVTGSLHMGH. Positions 523-527 match the 'KMSKS' region motif; sequence KMSKS. An ATP-binding site is contributed by Lys-526. Positions 859–931 form a coiled coil; the sequence is MAGLIDKEAE…EEQLEKIKYL (73 aa).

The protein belongs to the class-I aminoacyl-tRNA synthetase family. ValS type 1 subfamily. Monomer.

Its subcellular location is the cytoplasm. It catalyses the reaction tRNA(Val) + L-valine + ATP = L-valyl-tRNA(Val) + AMP + diphosphate. Functionally, catalyzes the attachment of valine to tRNA(Val). As ValRS can inadvertently accommodate and process structurally similar amino acids such as threonine, to avoid such errors, it has a 'posttransfer' editing activity that hydrolyzes mischarged Thr-tRNA(Val) in a tRNA-dependent manner. This Alcanivorax borkumensis (strain ATCC 700651 / DSM 11573 / NCIMB 13689 / SK2) protein is Valine--tRNA ligase.